We begin with the raw amino-acid sequence, 647 residues long: DNA topoisomerase 3 (647 aa).

A Toprim domain is found at 2-135 (TRLFIAEKPS…KKETVQRLLI (134 aa)). 3 residues coordinate Mg(2+): glutamate 8, aspartate 104, and aspartate 106. Residues 156–608 (FIPLSVSALA…TLQGRLEQLI (453 aa)) enclose the Topo IA-type catalytic domain. Residues 195-200 (SVGRVQ) are interaction with DNA. The O-(5'-phospho-DNA)-tyrosine intermediate role is filled by tyrosine 332.

It belongs to the type IA topoisomerase family. Mg(2+) is required as a cofactor.

It carries out the reaction ATP-independent breakage of single-stranded DNA, followed by passage and rejoining.. In terms of biological role, releases the supercoiling and torsional tension of DNA, which is introduced during the DNA replication and transcription, by transiently cleaving and rejoining one strand of the DNA duplex. Introduces a single-strand break via transesterification at a target site in duplex DNA. The scissile phosphodiester is attacked by the catalytic tyrosine of the enzyme, resulting in the formation of a DNA-(5'-phosphotyrosyl)-enzyme intermediate and the expulsion of a 3'-OH DNA strand. The free DNA strand then undergoes passage around the unbroken strand, thus removing DNA supercoils. Finally, in the religation step, the DNA 3'-OH attacks the covalent intermediate to expel the active-site tyrosine and restore the DNA phosphodiester backbone. The protein is DNA topoisomerase 3 of Vibrio cholerae serotype O1 (strain ATCC 39315 / El Tor Inaba N16961).